The following is a 1328-amino-acid chain: Retrovirus-related Pol polyprotein from transposon TNT 1-94 (1328 aa).

The tract at residues 189–265 (PENQGQALIT…SGQKNDDNTA (77 aa)) is disordered. Residues 217–229 (ARGKSKNRSKSRV) are compositionally biased toward basic residues. The segment at 230-247 (RNCYNCNQPGHFKRDCPN) adopts a CCHC-type zinc-finger fold. The span at 241–253 (FKRDCPNPRKGKG) shows a compositional bias: basic and acidic residues. Asp-297 serves as the catalytic For protease activity. One can recognise an Integrase catalytic domain in the interval 473 to 642 (SSERKLNILD…IPERVWTNKE (170 aa)). Over residues 729–742 (TIPSTSNNPTSAES) the composition is skewed to polar residues. The disordered stretch occupies residues 729–800 (TIPSTSNNPT…RVESRRYPST (72 aa)). Basic and acidic residues predominate over residues 770-798 (EVEHPTQGEEQHQPLRRSERPRVESRRYP).

The enzyme catalyses DNA(n) + a 2'-deoxyribonucleoside 5'-triphosphate = DNA(n+1) + diphosphate. The chain is Retrovirus-related Pol polyprotein from transposon TNT 1-94 from Nicotiana tabacum (Common tobacco).